We begin with the raw amino-acid sequence, 446 residues long: Chromosomal replication initiator protein DnaA (446 aa).

Positions 1 to 73 (MAAQLNELWQ…INSMKIITTK (73 aa)) are domain I, interacts with DnaA modulators. The interval 73-107 (KKYDIAFLISSEEALETDEDQETDTNNVNTDTSSS) is domain II. Residues 108–324 (MLNPKYKFDS…GALIRIVAFS (217 aa)) are domain III, AAA+ region. The ATP site is built by glycine 152, glycine 154, lysine 155, and threonine 156. Positions 325 to 446 (SLTNKEISVD…NEITKRFSPK (122 aa)) are domain IV, binds dsDNA.

The protein belongs to the DnaA family. Oligomerizes as a right-handed, spiral filament on DNA at oriC.

The protein localises to the cytoplasm. Plays an essential role in the initiation and regulation of chromosomal replication. ATP-DnaA binds to the origin of replication (oriC) to initiate formation of the DNA replication initiation complex once per cell cycle. Binds the DnaA box (a 9 base pair repeat at the origin) and separates the double-stranded (ds)DNA. Forms a right-handed helical filament on oriC DNA; dsDNA binds to the exterior of the filament while single-stranded (ss)DNA is stabiized in the filament's interior. The ATP-DnaA-oriC complex binds and stabilizes one strand of the AT-rich DNA unwinding element (DUE), permitting loading of DNA polymerase. After initiation quickly degrades to an ADP-DnaA complex that is not apt for DNA replication. Binds acidic phospholipids. The sequence is that of Chromosomal replication initiator protein DnaA from Clostridium acetobutylicum (strain ATCC 824 / DSM 792 / JCM 1419 / IAM 19013 / LMG 5710 / NBRC 13948 / NRRL B-527 / VKM B-1787 / 2291 / W).